Consider the following 445-residue polypeptide: tRNA modification GTPase MnmE (445 aa).

3 residues coordinate (6S)-5-formyl-5,6,7,8-tetrahydrofolate: Arg-20, Glu-79, and Lys-119. Residues 215–371 (GLKLAIIGPP…ILKNIENIAE (157 aa)) enclose the TrmE-type G domain. Asn-225 is a binding site for K(+). GTP contacts are provided by residues 225 to 230 (NAGKSS), 244 to 250 (SNIAGTT), and 269 to 272 (DTAG). Ser-229 provides a ligand contact to Mg(2+). Ser-244, Ile-246, and Thr-249 together coordinate K(+). Thr-250 lines the Mg(2+) pocket. Residue Lys-445 participates in (6S)-5-formyl-5,6,7,8-tetrahydrofolate binding.

Belongs to the TRAFAC class TrmE-Era-EngA-EngB-Septin-like GTPase superfamily. TrmE GTPase family. Homodimer. Heterotetramer of two MnmE and two MnmG subunits. K(+) is required as a cofactor.

It is found in the cytoplasm. In terms of biological role, exhibits a very high intrinsic GTPase hydrolysis rate. Involved in the addition of a carboxymethylaminomethyl (cmnm) group at the wobble position (U34) of certain tRNAs, forming tRNA-cmnm(5)s(2)U34. This is tRNA modification GTPase MnmE from Rickettsia canadensis (strain McKiel).